Reading from the N-terminus, the 75-residue chain is Conotoxin Im23.5 (75 aa).

Residues 1–23 (MKFFTCLLLLLVVLTVVFDNVDA) form the signal peptide. Cystine bridges form between cysteine 24–cysteine 28, cysteine 37–cysteine 40, and cysteine 41–cysteine 43. Residues 24 to 50 (CDRSCTGVMGHPSCATCCACFTSAGKR) constitute a propeptide that is removed on maturation.

Expressed by the venom duct.

The protein localises to the secreted. Probable neurotoxin. The protein is Conotoxin Im23.5 of Conus imperialis (Imperial cone).